A 203-amino-acid polypeptide reads, in one-letter code: Thymidylate kinase (203 aa).

An ATP-binding site is contributed by 14–21 (GGEGIGKS).

The protein belongs to the thymidylate kinase family.

The enzyme catalyses dTMP + ATP = dTDP + ADP. Its function is as follows. Phosphorylation of dTMP to form dTDP in both de novo and salvage pathways of dTTP synthesis. The polypeptide is Thymidylate kinase (Rickettsia rickettsii (strain Iowa)).